The following is a 293-amino-acid chain: Ribosomal protein L11 methyltransferase (293 aa).

Residues threonine 145, glycine 166, aspartate 188, and asparagine 230 each coordinate S-adenosyl-L-methionine.

The protein belongs to the methyltransferase superfamily. PrmA family.

The protein localises to the cytoplasm. It carries out the reaction L-lysyl-[protein] + 3 S-adenosyl-L-methionine = N(6),N(6),N(6)-trimethyl-L-lysyl-[protein] + 3 S-adenosyl-L-homocysteine + 3 H(+). In terms of biological role, methylates ribosomal protein L11. The chain is Ribosomal protein L11 methyltransferase from Shewanella baltica (strain OS223).